The chain runs to 375 residues: DNA replication and repair protein RecF (375 aa).

An ATP-binding site is contributed by 34-41 (GDNGAGKT).

Belongs to the RecF family.

The protein resides in the cytoplasm. Its function is as follows. The RecF protein is involved in DNA metabolism; it is required for DNA replication and normal SOS inducibility. RecF binds preferentially to single-stranded, linear DNA. It also seems to bind ATP. This Rhizobium rhizogenes (strain K84 / ATCC BAA-868) (Agrobacterium radiobacter) protein is DNA replication and repair protein RecF.